Here is an 84-residue protein sequence, read N- to C-terminus: Molybdopterin synthase sulfur carrier subunit (84 aa).

Residue Gly84 is modified to 1-thioglycine; alternate. Gly84 is modified (glycyl adenylate; alternate).

This sequence belongs to the MoaD family. MOCS2A subfamily. Heterotetramer; composed of 2 small (MOCS2A) and 2 large (MOCS2B) subunits. C-terminal thiocarboxylation occurs in 2 steps, it is first acyl-adenylated (-COAMP) via the hesA/moeB/thiF part of MOCS3, then thiocarboxylated (-COSH) via the rhodanese domain of MOCS3.

It localises to the cytoplasm. Its pathway is cofactor biosynthesis; molybdopterin biosynthesis. Its function is as follows. Acts as a sulfur carrier required for molybdopterin biosynthesis. Component of the molybdopterin synthase complex that catalyzes the conversion of precursor Z into molybdopterin by mediating the incorporation of 2 sulfur atoms into precursor Z to generate a dithiolene group. In the complex, serves as sulfur donor by being thiocarboxylated (-COSH) at its C-terminus by MOCS3. After interaction with MOCS2B, the sulfur is then transferred to precursor Z to form molybdopterin. This Caenorhabditis elegans protein is Molybdopterin synthase sulfur carrier subunit.